Consider the following 834-residue polypeptide: Striatin-interacting protein 2 (834 aa).

The disordered stretch occupies residues 1 to 48 (MEDPAAPGTGGPPANGNGNGGGKGKQAAPKGREAFRSQRRESEGSVDC). Positions 8–24 (GTGGPPANGNGNGGGKG) are enriched in gly residues. A compositionally biased stretch (basic and acidic residues) spans 30 to 43 (KGREAFRSQRRESE). S318, S329, and S354 each carry phosphoserine. A disordered region spans residues 321–345 (SYTLDLGESQLAPPPSKLRGRRGSR). The disordered stretch occupies residues 360–382 (ERDLFKTEEPATEEEEESAGDGE). A compositionally biased stretch (acidic residues) spans 369–379 (PATEEEEESAG).

The protein belongs to the STRIP family. Part of the core of STRIPAK complexes composed of PP2A catalytic and scaffolding subunits, the striatins (PP2A regulatory subunits), the striatin-associated proteins MOB4, STRIP1 and STRIP2, PDCD10 and members of the STE20 kinases, such as STK24 and STK26. Interacts with CTTNBP2NL.

It localises to the cytoplasm. Functionally, plays a role in the regulation of cell morphology and cytoskeletal organization. Required in the control of cell shape. Calmodulin-binding scaffolding protein which is the center of the striatin-interacting phosphatase and kinase (STRIPAK) complexes. STRIPAK complexes have critical roles in protein (de)phosphorylation and are regulators of multiple signaling pathways including Hippo, MAPK, nuclear receptor and cytoskeleton remodeling. Different types of STRIPAK complexes are involved in a variety of biological processes such as cell growth, differentiation, apoptosis, metabolism and immune regulation. This Homo sapiens (Human) protein is Striatin-interacting protein 2.